Consider the following 453-residue polypeptide: Homogentisate 1,2-dioxygenase (453 aa).

The active-site Proton acceptor is His306. Fe cation-binding residues include His349 and Glu355. Homogentisate is bound by residues Tyr364 and His385. His385 contributes to the Fe cation binding site.

This sequence belongs to the homogentisate dioxygenase family. As to quaternary structure, hexamer; dimer of trimers. The cofactor is Fe cation.

The enzyme catalyses homogentisate + O2 = 4-maleylacetoacetate + H(+). It participates in amino-acid degradation; L-phenylalanine degradation; acetoacetate and fumarate from L-phenylalanine: step 4/6. Involved in the catabolism of homogentisate (2,5-dihydroxyphenylacetate or 2,5-OH-PhAc), a central intermediate in the degradation of phenylalanine and tyrosine. Catalyzes the oxidative ring cleavage of the aromatic ring of homogentisate to yield maleylacetoacetate. The polypeptide is Homogentisate 1,2-dioxygenase (Rhizobium rhizogenes (strain K84 / ATCC BAA-868) (Agrobacterium radiobacter)).